Here is a 58-residue protein sequence, read N- to C-terminus: DNA-directed RNA polymerases I, II, and III subunit RPABC4 (58 aa).

Residues C19, C22, C36, and C39 each coordinate Zn(2+). The segment at 19–39 (CGECHTENEIKSRDPIRCREC) adopts a C4-type zinc-finger fold.

The protein belongs to the archaeal Rpo12/eukaryotic RPC10 RNA polymerase subunit family. In terms of assembly, component of the RNA polymerase I (Pol I), RNA polymerase II (Pol II) and RNA polymerase III (Pol III) complexes consisting of at least 13, 12 and 17 subunits, respectively. Pol I complex consists of a ten-subunit catalytic core composed of POLR1A/RPA1, POLR1B/RPA2, POLR1C/RPAC1, POLR1D/RPAC2, POLR1H/RPA12, POLR2E/RPABC1, POLR2F/RPABC2, POLR2H/RPABC3, POLR2K/RPABC4 and POLR2L/RPABC5; a mobile stalk subunit POLR1F/RPA43 protruding from the core and additional subunits homologous to general transcription factors POLR1E/RPA49 and POLR1G/RPA34. Part of Pol I pre-initiation complex (PIC), in which Pol I core assembles with RRN3 and promoter-bound UTBF and SL1/TIF-IB complex. Pol II complex contains a ten-subunit catalytic core composed of POLR2A/RPB1, POLR2B/RPB2, POLR2C/RPB3, POLR2I/RPB9, POLR2J/RPB11, POLR2E/RPABC1, POLR2F/RPABC2, POLR2H/RPABC3, POLR2K/RPABC4 and POLR2L/RPABC5 and a mobile stalk composed of two subunits POLR2D/RPB4 and POLR2G/RPB7. Part of Pol II(G) complex, in which Pol II core associates with an additional subunit POLR2M; unlike conventional Pol II, Pol II(G) functions as a transcriptional repressor. Part of TBP-based Pol II pre-initiation complex (PIC), in which Pol II core assembles with general transcription factors and other specific initiation factors including GTF2E1, GTF2E2, GTF2F1, GTF2F2, TCEA1, ERCC2, ERCC3, GTF2H2, GTF2H3, GTF2H4, GTF2H5, GTF2A1, GTF2A2, GTF2B and TBP; this large multi-subunit PIC complex mediates DNA unwinding and targets Pol II core to the transcription start site where the first phosphodiester bond forms. Pol III complex consists of a ten-subunit catalytic core composed of POLR3A/RPC1, POLR3B/RPC2, POLR1C/RPAC1, POLR1D/RPAC2, POLR3K/RPC10, POLR2E/RPABC1, POLR2F/RPABC2, POLR2H/RPABC3, POLR2K/RPABC4 and POLR2L/RPABC5; a mobile stalk composed of two subunits POLR3H/RPC8 and CRCP/RPC9, protruding from the core and functioning primarily in transcription initiation; and additional subunits homologous to general transcription factors of the RNA polymerase II machinery, POLR3C/RPC3-POLR3F/RPC6-POLR3G/RPC7 heterotrimer required for transcription initiation and POLR3D/RPC4-POLR3E/RPC5 heterodimer involved in both transcription initiation and termination.

Its subcellular location is the nucleus. The protein localises to the nucleolus. In terms of biological role, DNA-dependent RNA polymerase catalyzes the transcription of DNA into RNA using the four ribonucleoside triphosphates as substrates. Common component of RNA polymerases I, II and III which synthesize ribosomal RNA precursors, mRNA precursors and many functional non-coding RNAs, and a small RNAs, such as 5S rRNA and tRNAs, respectively. The polypeptide is DNA-directed RNA polymerases I, II, and III subunit RPABC4 (Polr2k) (Mus musculus (Mouse)).